The sequence spans 465 residues: Cysteine--tRNA ligase (465 aa).

Cys-30 contacts Zn(2+). The 'HIGH' region signature appears at 32–42 (MTVYDYCHVGH). 3 residues coordinate Zn(2+): Cys-214, His-239, and Glu-243. Positions 271–275 (KMSKS) match the 'KMSKS' region motif. Lys-274 is an ATP binding site.

The protein belongs to the class-I aminoacyl-tRNA synthetase family. As to quaternary structure, monomer. It depends on Zn(2+) as a cofactor.

The protein resides in the cytoplasm. It carries out the reaction tRNA(Cys) + L-cysteine + ATP = L-cysteinyl-tRNA(Cys) + AMP + diphosphate. This chain is Cysteine--tRNA ligase, found in Paraburkholderia xenovorans (strain LB400).